We begin with the raw amino-acid sequence, 992 residues long: Presequence protease, mitochondrial (992 aa).

Residues 1–30 (MNYAKLSIAFSKKTIKTHNCRLFQRWLHVG) constitute a mitochondrion transit peptide. Histidine 91 provides a ligand contact to Zn(2+). Glutamate 94 serves as the catalytic Proton acceptor. Histidine 95 is a Zn(2+) binding site. Glutamate 167 is an active-site residue. Glutamate 192 is a Zn(2+) binding site.

The protein belongs to the peptidase M16 family. PreP subfamily. In terms of assembly, monomer and homodimer; homodimerization is induced by binding of the substrate. It depends on Zn(2+) as a cofactor.

It localises to the mitochondrion intermembrane space. The protein localises to the mitochondrion matrix. In terms of biological role, degrades mitochondrial transit peptides after their cleavage in the intermembrane space or in the matrix, and presequence peptides; clearance of these peptides is required to keep the presequence processing machinery running. Preferentially cleaves the N-terminal side of paired basic amino acid residues. Also degrades other unstructured peptides. May function as an ATP-dependent peptidase as opposed to a metalloendopeptidase. The sequence is that of Presequence protease, mitochondrial (cym1) from Schizosaccharomyces pombe (strain 972 / ATCC 24843) (Fission yeast).